We begin with the raw amino-acid sequence, 439 residues long: Xylose isomerase (439 aa).

Active-site residues include His-101 and Asp-104. Mg(2+) contacts are provided by Glu-232, Glu-268, His-271, Asp-296, Asp-307, Asp-309, and Asp-339.

The protein belongs to the xylose isomerase family. As to quaternary structure, homotetramer. Mg(2+) serves as cofactor.

The protein localises to the cytoplasm. The enzyme catalyses alpha-D-xylose = alpha-D-xylulofuranose. In Yersinia enterocolitica serotype O:8 / biotype 1B (strain NCTC 13174 / 8081), this protein is Xylose isomerase.